The following is a 410-amino-acid chain: Monoglucosyldiacylglycerol epimerase (410 aa).

The N-terminal stretch at 1 to 14 (MAMAWLMGLGLALA) is a signal peptide. Helical transmembrane passes span 71-91 (ALVM…WQGF) and 96-116 (LILA…SAIA). Tyr320 acts as the Proton acceptor in catalysis. A helical transmembrane segment spans residues 380–400 (IIVTINPITFIAFPVKEFFVS).

Belongs to the short-chain dehydrogenases/reductases (SDR) family.

The protein localises to the membrane. The catalysed reaction is a 1,2-diacyl-3-O-(beta-D-glucopyranosyl)-sn-glycerol = a 1,2-diacyl-3-O-(beta-D-galactosyl)-sn-glycerol. Its function is as follows. Involved in the biosynthesis of galactolipids found in the photosynthetic membranes. Catalyzes the isomerization of monoglucosyldiacylglycerol (GlcDG) to yield monogalactosyldiacylglycerol (MGDG). The polypeptide is Monoglucosyldiacylglycerol epimerase (Synechocystis sp. (strain ATCC 27184 / PCC 6803 / Kazusa)).